The chain runs to 263 residues: Lysine 5,6-aminomutase beta subunit (263 aa).

A B12-binding domain is found at 120-259; the sequence is EVVMVGASTG…TFILKEMVQR (140 aa). Adenosylcob(III)alamin-binding positions include 130-136 and histidine 133; that span reads TDAHTVG. Lysine 144 bears the N6-(pyridoxal phosphate)lysine mark. Adenosylcob(III)alamin contacts are provided by residues 185 to 192, 219 to 223, and 239 to 244; these read LVSQTVTQ, IAGGA, and FGPGKY.

Belongs to the KamE family. As to quaternary structure, heterotetramer of 2 alpha and 2 beta subunits. Adenosylcob(III)alamin is required as a cofactor. It depends on pyridoxal 5'-phosphate as a cofactor.

The enzyme catalyses (3S)-3,6-diaminohexanoate = (3S,5S)-3,5-diaminohexanoate. The catalysed reaction is D-lysine = (2R,5S)-2,5-diaminohexanoate. Its pathway is amino-acid degradation; L-lysine degradation via acetate pathway. Its function is as follows. Catalyzes the migration of the L-beta-lysine and D-lysine epsilon amino group to the delta carbon to produce 3,5-diaminohexanoate and 2,5-diaminohexanoate, respectively. The chain is Lysine 5,6-aminomutase beta subunit from Fusobacterium nucleatum subsp. nucleatum (strain ATCC 25586 / DSM 15643 / BCRC 10681 / CIP 101130 / JCM 8532 / KCTC 2640 / LMG 13131 / VPI 4355).